The sequence spans 89 residues: Bombyxin A-2 (89 aa).

A signal peptide spans 1-19 (MKILLAIALMLSTVMWVST). Gln-20 is subject to Pyrrolidone carboxylic acid. Disulfide bonds link Cys-29-Cys-76, Cys-41-Cys-89, and Cys-75-Cys-80. Positions 50–68 (SDAQFASYGSAWLMPYSAG) are cleaved as a propeptide — c peptide like.

It belongs to the insulin family. As to quaternary structure, heterodimer of a B chain and an A chain linked by two disulfide bonds.

The protein resides in the secreted. In terms of biological role, brain peptide responsible for activation of prothoracic glands to produce ecdysone in insects. This chain is Bombyxin A-2 (BBXA2), found in Bombyx mori (Silk moth).